The primary structure comprises 491 residues: Ketol-acid reductoisomerase (NADP(+)) (491 aa).

A KARI N-terminal Rossmann domain is found at Ile-16 to Ser-207. NADP(+)-binding positions include Cys-44 to Gln-47, Lys-67, Ser-77, and Asp-107 to Gln-109. His-131 is a catalytic residue. An NADP(+)-binding site is contributed by Gly-157. KARI C-terminal knotted domains are found at residues Ser-208–Ser-344 and Tyr-345–Met-484. 4 residues coordinate Mg(2+): Asp-216, Glu-220, Glu-389, and Glu-393. A substrate-binding site is contributed by Ser-414.

This sequence belongs to the ketol-acid reductoisomerase family. Mg(2+) is required as a cofactor.

The enzyme catalyses (2R)-2,3-dihydroxy-3-methylbutanoate + NADP(+) = (2S)-2-acetolactate + NADPH + H(+). It carries out the reaction (2R,3R)-2,3-dihydroxy-3-methylpentanoate + NADP(+) = (S)-2-ethyl-2-hydroxy-3-oxobutanoate + NADPH + H(+). Its pathway is amino-acid biosynthesis; L-isoleucine biosynthesis; L-isoleucine from 2-oxobutanoate: step 2/4. It functions in the pathway amino-acid biosynthesis; L-valine biosynthesis; L-valine from pyruvate: step 2/4. In terms of biological role, involved in the biosynthesis of branched-chain amino acids (BCAA). Catalyzes an alkyl-migration followed by a ketol-acid reduction of (S)-2-acetolactate (S2AL) to yield (R)-2,3-dihydroxy-isovalerate. In the isomerase reaction, S2AL is rearranged via a Mg-dependent methyl migration to produce 3-hydroxy-3-methyl-2-ketobutyrate (HMKB). In the reductase reaction, this 2-ketoacid undergoes a metal-dependent reduction by NADPH to yield (R)-2,3-dihydroxy-isovalerate. This is Ketol-acid reductoisomerase (NADP(+)) from Buchnera aphidicola subsp. Schizaphis graminum (strain Sg).